We begin with the raw amino-acid sequence, 261 residues long: Troponin T, slow skeletal muscle (261 aa).

A compositionally biased stretch (acidic residues) spans 1–30 (MSDTEEQEYEEEQAEDEEAVEEEAPEEPEP). 2 disordered regions span residues 1 to 61 (MSDT…ERVD) and 108 to 152 (ERAE…KKKV). Residue Ser2 is modified to Phosphoserine; by CK2. The span at 31 to 40 (VAEREEERPK) shows a compositional bias: basic and acidic residues. Over residues 42–54 (SRPVVPPLIPPKI) the composition is skewed to pro residues. The span at 108–148 (ERAEQQRFRTEKERERQAKLAEEKMRKEEEEAKKRAEDDAK) shows a compositional bias: basic and acidic residues.

The protein belongs to the troponin T family. In terms of assembly, interacts with TPM3. In terms of tissue distribution, expressed in soleus muscle. Isoform 4 is predominantly expressed in fast muscles.

Troponin T is the tropomyosin-binding subunit of troponin, the thin filament regulatory complex which confers calcium-sensitivity to striated muscle actomyosin ATPase activity. In Rattus norvegicus (Rat), this protein is Troponin T, slow skeletal muscle (Tnnt1).